We begin with the raw amino-acid sequence, 222 residues long: Cytidylate kinase (222 aa).

Position 9–17 (9–17) interacts with ATP; it reads GPAGSGKTT.

Belongs to the cytidylate kinase family. Type 1 subfamily.

It localises to the cytoplasm. It carries out the reaction CMP + ATP = CDP + ADP. It catalyses the reaction dCMP + ATP = dCDP + ADP. This is Cytidylate kinase from Thermosipho africanus (strain TCF52B).